A 103-amino-acid polypeptide reads, in one-letter code: Co-chaperonin GroES (103 aa).

Belongs to the GroES chaperonin family. In terms of assembly, heptamer of 7 subunits arranged in a ring. Interacts with the chaperonin GroEL.

It is found in the cytoplasm. In terms of biological role, together with the chaperonin GroEL, plays an essential role in assisting protein folding. The GroEL-GroES system forms a nano-cage that allows encapsulation of the non-native substrate proteins and provides a physical environment optimized to promote and accelerate protein folding. GroES binds to the apical surface of the GroEL ring, thereby capping the opening of the GroEL channel. The polypeptide is Co-chaperonin GroES (Prochlorococcus marinus (strain MIT 9515)).